The primary structure comprises 505 residues: Maturase K (505 aa).

This sequence belongs to the intron maturase 2 family. MatK subfamily.

It is found in the plastid. The protein localises to the chloroplast. Functionally, usually encoded in the trnK tRNA gene intron. Probably assists in splicing its own and other chloroplast group II introns. This chain is Maturase K, found in Rosa stellata (Star rose).